Here is a 738-residue protein sequence, read N- to C-terminus: Dipeptidyl peptidase 3 (738 aa).

Ala-2 carries the N-acetylalanine modification. Residue His-450 participates in Zn(2+) binding. Glu-451 is a catalytic residue. Residues His-455 and Glu-508 each contribute to the Zn(2+) site.

The protein belongs to the peptidase M49 family. Requires Zn(2+) as cofactor.

It localises to the cytoplasm. It is found in the cytosol. It catalyses the reaction Release of an N-terminal dipeptide from a peptide comprising four or more residues, with broad specificity. Also acts on dipeptidyl 2-naphthylamides.. Cleaves and degrades bioactive peptides, including angiotensin, Leu-enkephalin and Met-enkephalin. Also cleaves Arg-Arg-beta-naphthylamide (in vitro). In Mus musculus (Mouse), this protein is Dipeptidyl peptidase 3 (Dpp3).